The primary structure comprises 232 residues: E3 ubiquitin-protein ligase RNF125 (232 aa).

Residues 1 to 10 show a composition bias toward polar residues; it reads MGSVLSTDSG. The segment at 1-23 is disordered; sequence MGSVLSTDSGKSAPASATARALE. Residue Gly-2 is the site of N-myristoyl glycine attachment. Residues Cys-37 and Cys-40 each contribute to the Zn(2+) site. An RING-type zinc finger spans residues 37-76; it reads CAVCLEVLHQPVRTRCGHVFCRSCIATSLKNNKWTCPYCR. The segment at 43-45 is interaction with the C2HC RNF-type zinc finger; the sequence is VLH. Zn(2+) is bound by residues Cys-52, His-54, Cys-57, Cys-60, Cys-72, Cys-75, Cys-100, and Cys-103. The segment at 100-119 adopts a C2HC RNF-type zinc-finger fold; that stretch reads CAECDTLVCLSEMRAHIRTC. Residues 109–113 form an interaction with the RING-type zinc finger region; it reads LSEMR. Zn(2+) is bound by residues His-115 and Cys-119. The interval 120–128 is linker region; sequence QKYIDKYGP. The tract at residues 210-224 is required for interaction with ubiquitin and for autoubiquitination; it reads EEALIRRVLDRSLLE.

Interacts with UBE2D1. Interacts with VCP/p97; leading to recruit RNF125 to RIGI and promote ubiquitination of RIGI. In terms of processing, autoubiquitinated, leading to its subsequent proteasomal degradation. In terms of tissue distribution, predominantly expressed in lymphoid tissues, including bone marrow, spleen and thymus. Also weakly expressed in other tissues. Predominant in the CD4(+) and CD8(+) T-cells, suggesting that it is preferentially confined to T-cells.

Its subcellular location is the golgi apparatus membrane. It catalyses the reaction S-ubiquitinyl-[E2 ubiquitin-conjugating enzyme]-L-cysteine + [acceptor protein]-L-lysine = [E2 ubiquitin-conjugating enzyme]-L-cysteine + N(6)-ubiquitinyl-[acceptor protein]-L-lysine.. The protein operates within protein modification; protein ubiquitination. E3 ubiquitin-protein ligase that mediates ubiquitination and subsequent proteasomal degradation of target proteins, such as RIGI, MAVS/IPS1, IFIH1/MDA5, JAK1 and p53/TP53. Acts as a negative regulator of type I interferon production by mediating ubiquitination of RIGI at 'Lys-181', leading to RIGI degradation. Mediates ubiquitination and subsequent degradation of p53/TP53. Mediates ubiquitination and subsequent degradation of JAK1. Acts as a positive regulator of T-cell activation. This chain is E3 ubiquitin-protein ligase RNF125, found in Homo sapiens (Human).